The primary structure comprises 309 residues: Homoserine kinase (309 aa).

91–101 serves as a coordination point for ATP; it reads PIGSGLGSSAC.

It belongs to the GHMP kinase family. Homoserine kinase subfamily.

The protein resides in the cytoplasm. The catalysed reaction is L-homoserine + ATP = O-phospho-L-homoserine + ADP + H(+). It functions in the pathway amino-acid biosynthesis; L-threonine biosynthesis; L-threonine from L-aspartate: step 4/5. In terms of biological role, catalyzes the ATP-dependent phosphorylation of L-homoserine to L-homoserine phosphate. This chain is Homoserine kinase, found in Yersinia enterocolitica serotype O:8 / biotype 1B (strain NCTC 13174 / 8081).